The sequence spans 177 residues: Peptide deformylase 2 (177 aa).

Fe cation contacts are provided by Cys99 and His141. Residue Glu142 is part of the active site. A Fe cation-binding site is contributed by His145.

Belongs to the polypeptide deformylase family. Fe(2+) serves as cofactor.

It carries out the reaction N-terminal N-formyl-L-methionyl-[peptide] + H2O = N-terminal L-methionyl-[peptide] + formate. Its function is as follows. Removes the formyl group from the N-terminal Met of newly synthesized proteins. Requires at least a dipeptide for an efficient rate of reaction. N-terminal L-methionine is a prerequisite for activity but the enzyme has broad specificity at other positions. The polypeptide is Peptide deformylase 2 (Ralstonia nicotianae (strain ATCC BAA-1114 / GMI1000) (Ralstonia solanacearum)).